Consider the following 249-residue polypeptide: ATP synthase subunit a, chloroplastic (249 aa).

5 helical membrane passes run 40–60 (QVLI…VIAI), 97–117 (VPFI…GALL), 136–156 (INTT…AGLS), 201–221 (LVVV…VMFL), and 222–242 (GLFT…AYIG).

It belongs to the ATPase A chain family. As to quaternary structure, F-type ATPases have 2 components, CF(1) - the catalytic core - and CF(0) - the membrane proton channel. CF(1) has five subunits: alpha(3), beta(3), gamma(1), delta(1), epsilon(1). CF(0) has four main subunits: a, b, b' and c.

It localises to the plastid. The protein localises to the chloroplast thylakoid membrane. Key component of the proton channel; it plays a direct role in the translocation of protons across the membrane. The polypeptide is ATP synthase subunit a, chloroplastic (Barbarea verna (Land cress)).